The chain runs to 218 residues: Akirin (218 aa).

A disordered region spans residues 96 to 150 (KAIPRSNDFDDDGDQRGDGCSSNYSKAYRAPSSPKSGSDSEGEAPSTSVTDRSSA). The segment covering 128–147 (SPKSGSDSEGEAPSTSVTDR) has biased composition (polar residues).

The protein belongs to the akirin family. Interacts with hda-1, a component of the NuRD complex. Interacts with let-418, a component of the NuRD and MEC complexes. Interacts with the transcription factor ceh-18. Interacts with ima-2. As to expression, localizes to somatic tissues throughout the body, including muscle cells. Expressed in lateral epithelial seam cells, the hyp7 epidermal syncytium, and multiple head and tail neurons.

Its subcellular location is the nucleus. Its function is as follows. Molecular adapter that acts as a bridge between a variety of multiprotein complexes, and which is involved in antifungal innate immunity, development of the muscle and sister chromatid cohesion. Plays a role in antifungal innate immunity by acting as a bridge between components of the NuRD (Nucleosome Remodeling and Deacetylase) and MEC chromatin remodeling complexes. NuRD and MEC complexes bind to the promoters of antimicrobial peptide genes and may recruit other proteins such as ceh-18 to control gene expression in response to fungal infection. During meiotic prophase I, plays a role in the disassembly of synaptonemal complex proteins and in the regulation of chromosome condensation and segregation. Together with nuclear import receptor ima-2, required for the import and load of cohesin complex proteins in meiotic nuclei, possibly by acting as a bridge between ima-2 and cohesins. Required for embryonic development of muscle tissue. This Caenorhabditis elegans protein is Akirin.